A 347-amino-acid polypeptide reads, in one-letter code: Haptoglobin (347 aa).

Positions 1–18 (MRALGAVVTLLLWGQLFA) are cleaved as a signal peptide. Residues 31 to 88 (DSCPKPPEIANGYVEHLVRYRCRQFYRLRAEGDGVYTLNDEKQWVNTVAGEKLPECEA) form the Sushi domain. 4 disulfide bridges follow: C52/C86, C90/C207, C250/C281, and C292/C322. The region spanning 103–345 (IIGGSMDAKG…LKDWVQETMA (243 aa)) is the Peptidase S1 domain. N148, N182, N256, and N264 each carry an N-linked (GlcNAc...) asparagine glycan. The interaction with CD163 stretch occupies residues 259–264 (VPEKKN).

The protein belongs to the peptidase S1 family. Tetramer of two alpha and two beta chains; disulfide-linked. The hemoglobin/haptoglobin complex is composed of a haptoglobin dimer bound to two hemoglobin alpha-beta dimers. Interacts with CD163. Interacts with ERGIC3. In terms of tissue distribution, expressed by the liver and secreted in plasma.

The protein localises to the secreted. In terms of biological role, as a result of hemolysis, hemoglobin is found to accumulate in the kidney and is secreted in the urine. Haptoglobin captures, and combines with free plasma hemoglobin to allow hepatic recycling of heme iron and to prevent kidney damage. Haptoglobin also acts as an antioxidant, has antibacterial activity and plays a role in modulating many aspects of the acute phase response. Hemoglobin/haptoglobin complexes are rapidly cleared by the macrophage CD163 scavenger receptor expressed on the surface of liver Kupfer cells through an endocytic lysosomal degradation pathway. In Mus musculus (Mouse), this protein is Haptoglobin (Hp).